The following is a 604-amino-acid chain: Serine/threonine-protein kinase A-Raf (604 aa).

An RBD domain is found at 19-91 (GTVKVYLPNK…DGEELIVEVL (73 aa)). The Phorbol-ester/DAG-type zinc-finger motif lies at 98–144 (MHNFVRKTFFSLAFCDFCLKFLFHGFRCQTCGYKFHQHCSSKVPTVC). Zn(2+)-binding residues include His99, Cys112, Cys115, Cys125, Cys128, His133, Cys136, and Cys144. Phosphoserine occurs at positions 157 and 162. Disordered stretches follow at residues 177–222 (NELL…HMVS) and 241–288 (TDAA…EKKK). At Thr181 the chain carries Phosphothreonine. Ser186 carries the phosphoserine modification. Over residues 210-222 (IRSTSTPNVHMVS) the composition is skewed to polar residues. Low complexity predominate over residues 252–265 (PRGSPSPASVSSGR). Ser255 and Ser267 each carry phosphoserine. Basic and acidic residues predominate over residues 272 to 287 (LPSEQRERKSLADEKK). A Protein kinase domain is found at 308–568 (VQLLKRIGTG…PQILATIELL (261 aa)). ATP is bound by residues 314-322 (IGTGSFGTV) and Lys334. At Thr316 the chain carries Phosphothreonine. Catalysis depends on Asp427, which acts as the Proton acceptor.

It belongs to the protein kinase superfamily. TKL Ser/Thr protein kinase family. RAF subfamily. In terms of assembly, interacts with TH1L/NELFD. The cofactor is Zn(2+). Post-translationally, dephosphorylation by the SHOC2-MRAS-PP1c (SMP) complex consisting of SHOC2, GTP-bound M-Ras/MRAS and the catalytic subunit of protein phosphatase 1 (PPP1CA, PPP1CB or PPP1CC); this relieves inactivation and stimulates kinase activity.

It catalyses the reaction L-seryl-[protein] + ATP = O-phospho-L-seryl-[protein] + ADP + H(+). The catalysed reaction is L-threonyl-[protein] + ATP = O-phospho-L-threonyl-[protein] + ADP + H(+). In terms of biological role, involved in the transduction of mitogenic signals from the cell membrane to the nucleus. May also regulate the TOR signaling cascade. Phosphorylates PFKFB2. The polypeptide is Serine/threonine-protein kinase A-Raf (Araf) (Mus musculus (Mouse)).